The sequence spans 504 residues: Dimethylsulfoniopropionate lyase 5 (504 aa).

Belongs to the aspartate/glutamate racemases family. ALMA1 subfamily. As to quaternary structure, homotetramer.

It carries out the reaction S,S-dimethyl-beta-propiothetin = acrylate + dimethyl sulfide + H(+). Functionally, mediates cleavage of dimethylsulfoniopropionate (DMSP) into dimethyl sulfide (DMS) and acrylate. DMS is the principal form by which sulfur is transported from oceans to the atmosphere and is a key component of the ocean sulfur cycle. This is Dimethylsulfoniopropionate lyase 5 from Emiliania huxleyi (strain CCMP1516).